The chain runs to 160 residues: Cytochrome b6-f complex subunit 4 (160 aa).

The next 3 membrane-spanning stretches (helical) occupy residues 36-56 (LLYV…GLAV), 95-115 (LLGI…PFIE), and 131-151 (AVFL…TFPI).

The protein belongs to the cytochrome b family. PetD subfamily. In terms of assembly, the 4 large subunits of the cytochrome b6-f complex are cytochrome b6, subunit IV (17 kDa polypeptide, PetD), cytochrome f and the Rieske protein, while the 4 small subunits are PetG, PetL, PetM and PetN. The complex functions as a dimer.

It is found in the cellular thylakoid membrane. Its function is as follows. Component of the cytochrome b6-f complex, which mediates electron transfer between photosystem II (PSII) and photosystem I (PSI), cyclic electron flow around PSI, and state transitions. The sequence is that of Cytochrome b6-f complex subunit 4 from Crocosphaera subtropica (strain ATCC 51142 / BH68) (Cyanothece sp. (strain ATCC 51142)).